A 270-amino-acid chain; its full sequence is 3-methyl-2-oxobutanoate hydroxymethyltransferase (270 aa).

2 residues coordinate Mg(2+): aspartate 41 and aspartate 80. 3-methyl-2-oxobutanoate is bound by residues 41-42, aspartate 80, and lysine 109; that span reads DS. Residue glutamate 111 coordinates Mg(2+). The active-site Proton acceptor is the glutamate 178.

It belongs to the PanB family. As to quaternary structure, homodecamer; pentamer of dimers. The cofactor is Mg(2+).

It is found in the cytoplasm. The enzyme catalyses 3-methyl-2-oxobutanoate + (6R)-5,10-methylene-5,6,7,8-tetrahydrofolate + H2O = 2-dehydropantoate + (6S)-5,6,7,8-tetrahydrofolate. It functions in the pathway cofactor biosynthesis; (R)-pantothenate biosynthesis; (R)-pantoate from 3-methyl-2-oxobutanoate: step 1/2. Catalyzes the reversible reaction in which hydroxymethyl group from 5,10-methylenetetrahydrofolate is transferred onto alpha-ketoisovalerate to form ketopantoate. This chain is 3-methyl-2-oxobutanoate hydroxymethyltransferase, found in Thermotoga sp. (strain RQ2).